Reading from the N-terminus, the 137-residue chain is Nucleoside diphosphate kinase (137 aa).

Positions 11, 59, 87, 93, 104, and 114 each coordinate ATP. Histidine 117 functions as the Pros-phosphohistidine intermediate in the catalytic mechanism.

Belongs to the NDK family. As to quaternary structure, homotetramer. It depends on Mg(2+) as a cofactor.

Its subcellular location is the cytoplasm. It catalyses the reaction a 2'-deoxyribonucleoside 5'-diphosphate + ATP = a 2'-deoxyribonucleoside 5'-triphosphate + ADP. The catalysed reaction is a ribonucleoside 5'-diphosphate + ATP = a ribonucleoside 5'-triphosphate + ADP. In terms of biological role, major role in the synthesis of nucleoside triphosphates other than ATP. The ATP gamma phosphate is transferred to the NDP beta phosphate via a ping-pong mechanism, using a phosphorylated active-site intermediate. In Frankia casuarinae (strain DSM 45818 / CECT 9043 / HFP020203 / CcI3), this protein is Nucleoside diphosphate kinase.